The following is a 394-amino-acid chain: GDSL esterase/lipase At1g31550 (394 aa).

The signal sequence occupies residues 1 to 27; sequence MASLDSHVLMKLGSLFLSTLFVSIVSS. Ser43 (nucleophile) is an active-site residue. N-linked (GlcNAc...) asparagine glycosylation is found at Asn138, Asn290, and Asn322. Catalysis depends on residues Asp345 and His348.

This sequence belongs to the 'GDSL' lipolytic enzyme family.

The protein resides in the secreted. The polypeptide is GDSL esterase/lipase At1g31550 (Arabidopsis thaliana (Mouse-ear cress)).